The sequence spans 334 residues: Adenosine deaminase (334 aa).

Zn(2+) contacts are provided by histidine 12 and histidine 14. Substrate-binding residues include histidine 14, aspartate 16, and glycine 170. Histidine 197 is a binding site for Zn(2+). Glutamate 200 (proton donor) is an active-site residue. Aspartate 278 is a binding site for Zn(2+). Aspartate 279 provides a ligand contact to substrate.

The protein belongs to the metallo-dependent hydrolases superfamily. Adenosine and AMP deaminases family. Adenosine deaminase subfamily. Zn(2+) is required as a cofactor.

It catalyses the reaction adenosine + H2O + H(+) = inosine + NH4(+). The catalysed reaction is 2'-deoxyadenosine + H2O + H(+) = 2'-deoxyinosine + NH4(+). Catalyzes the hydrolytic deamination of adenosine and 2-deoxyadenosine. The protein is Adenosine deaminase of Vibrio parahaemolyticus serotype O3:K6 (strain RIMD 2210633).